The primary structure comprises 203 residues: Imidazole glycerol phosphate synthase subunit HisH (203 aa).

Residues 1-203 (MIGIIDYGMG…KNFGEMIKCL (203 aa)) form the Glutamine amidotransferase type-1 domain. C79 functions as the Nucleophile in the catalytic mechanism. Active-site residues include H181 and E183.

Heterodimer of HisH and HisF.

Its subcellular location is the cytoplasm. It carries out the reaction 5-[(5-phospho-1-deoxy-D-ribulos-1-ylimino)methylamino]-1-(5-phospho-beta-D-ribosyl)imidazole-4-carboxamide + L-glutamine = D-erythro-1-(imidazol-4-yl)glycerol 3-phosphate + 5-amino-1-(5-phospho-beta-D-ribosyl)imidazole-4-carboxamide + L-glutamate + H(+). The enzyme catalyses L-glutamine + H2O = L-glutamate + NH4(+). The protein operates within amino-acid biosynthesis; L-histidine biosynthesis; L-histidine from 5-phospho-alpha-D-ribose 1-diphosphate: step 5/9. In terms of biological role, IGPS catalyzes the conversion of PRFAR and glutamine to IGP, AICAR and glutamate. The HisH subunit catalyzes the hydrolysis of glutamine to glutamate and ammonia as part of the synthesis of IGP and AICAR. The resulting ammonia molecule is channeled to the active site of HisF. The sequence is that of Imidazole glycerol phosphate synthase subunit HisH from Caldanaerobacter subterraneus subsp. tengcongensis (strain DSM 15242 / JCM 11007 / NBRC 100824 / MB4) (Thermoanaerobacter tengcongensis).